Here is a 414-residue protein sequence, read N- to C-terminus: Tryptophan synthase beta chain (414 aa).

The segment covering Met1 to Lys12 has biased composition (basic and acidic residues). The tract at residues Met1–Glu23 is disordered. An N6-(pyridoxal phosphate)lysine modification is found at Lys109.

This sequence belongs to the TrpB family. Tetramer of two alpha and two beta chains. The cofactor is pyridoxal 5'-phosphate.

The enzyme catalyses (1S,2R)-1-C-(indol-3-yl)glycerol 3-phosphate + L-serine = D-glyceraldehyde 3-phosphate + L-tryptophan + H2O. The protein operates within amino-acid biosynthesis; L-tryptophan biosynthesis; L-tryptophan from chorismate: step 5/5. In terms of biological role, the beta subunit is responsible for the synthesis of L-tryptophan from indole and L-serine. The sequence is that of Tryptophan synthase beta chain from Prochlorococcus marinus (strain MIT 9515).